Here is a 336-residue protein sequence, read N- to C-terminus: Ketol-acid reductoisomerase (NADP(+)) 1 (336 aa).

The region spanning 2 to 181 is the KARI N-terminal Rossmann domain; that stretch reads AKVYYEKDVT…GATRAGVLET (180 aa). NADP(+) contacts are provided by residues 25–28, Arg-48, Ser-52, and 82–85; these read YGSQ and DELQ. The active site involves His-107. Gly-133 is a binding site for NADP(+). Positions 182–327 constitute a KARI C-terminal knotted domain; sequence TFKEETETDL…RKLREMMPFV (146 aa). Asp-190, Glu-194, Glu-226, and Glu-230 together coordinate Mg(2+). Ser-251 contributes to the substrate binding site.

This sequence belongs to the ketol-acid reductoisomerase family. Mg(2+) is required as a cofactor.

It catalyses the reaction (2R)-2,3-dihydroxy-3-methylbutanoate + NADP(+) = (2S)-2-acetolactate + NADPH + H(+). The catalysed reaction is (2R,3R)-2,3-dihydroxy-3-methylpentanoate + NADP(+) = (S)-2-ethyl-2-hydroxy-3-oxobutanoate + NADPH + H(+). Its pathway is amino-acid biosynthesis; L-isoleucine biosynthesis; L-isoleucine from 2-oxobutanoate: step 2/4. It functions in the pathway amino-acid biosynthesis; L-valine biosynthesis; L-valine from pyruvate: step 2/4. Involved in the biosynthesis of branched-chain amino acids (BCAA). Catalyzes an alkyl-migration followed by a ketol-acid reduction of (S)-2-acetolactate (S2AL) to yield (R)-2,3-dihydroxy-isovalerate. In the isomerase reaction, S2AL is rearranged via a Mg-dependent methyl migration to produce 3-hydroxy-3-methyl-2-ketobutyrate (HMKB). In the reductase reaction, this 2-ketoacid undergoes a metal-dependent reduction by NADPH to yield (R)-2,3-dihydroxy-isovalerate. The protein is Ketol-acid reductoisomerase (NADP(+)) 1 of Bacillus cereus (strain ATCC 10987 / NRS 248).